The following is a 214-amino-acid chain: Orotate phosphoribosyltransferase (214 aa).

5-phospho-alpha-D-ribose 1-diphosphate is bound at residue Lys26. 34–35 provides a ligand contact to orotate; the sequence is FF. 5-phospho-alpha-D-ribose 1-diphosphate contacts are provided by residues 72-73, Arg99, Lys100, Lys103, His105, and 124-132; these read YK and DDVITAGTA. The orotate site is built by Thr128 and Arg156.

The protein belongs to the purine/pyrimidine phosphoribosyltransferase family. PyrE subfamily. As to quaternary structure, homodimer. The cofactor is Mg(2+).

It carries out the reaction orotidine 5'-phosphate + diphosphate = orotate + 5-phospho-alpha-D-ribose 1-diphosphate. Its pathway is pyrimidine metabolism; UMP biosynthesis via de novo pathway; UMP from orotate: step 1/2. Its function is as follows. Catalyzes the transfer of a ribosyl phosphate group from 5-phosphoribose 1-diphosphate to orotate, leading to the formation of orotidine monophosphate (OMP). The sequence is that of Orotate phosphoribosyltransferase from Pasteurella multocida (strain Pm70).